Reading from the N-terminus, the 327-residue chain is GMP reductase (327 aa).

Catalysis depends on Cys-175, which acts as the Thioimidate intermediate. 204 to 227 contributes to the NADP(+) binding site; the sequence is IIADGGIRTHGDIAKSIRFGASMV.

The protein belongs to the IMPDH/GMPR family. GuaC type 2 subfamily.

It carries out the reaction IMP + NH4(+) + NADP(+) = GMP + NADPH + 2 H(+). Functionally, catalyzes the irreversible NADPH-dependent deamination of GMP to IMP. It functions in the conversion of nucleobase, nucleoside and nucleotide derivatives of G to A nucleotides, and in maintaining the intracellular balance of A and G nucleotides. The protein is GMP reductase of Exiguobacterium sp. (strain ATCC BAA-1283 / AT1b).